We begin with the raw amino-acid sequence, 290 residues long: Inositol monophosphatase 2 (290 aa).

Residues E83, D103, I105, and D106 each contribute to the Mg(2+) site. E83 contacts substrate. Residues 105-108 (IDGT), 207-209 (GSS), Q226, and D233 each bind substrate. D233 contributes to the Mg(2+) binding site.

Belongs to the inositol monophosphatase superfamily. Homodimer. Mg(2+) serves as cofactor. In terms of tissue distribution, mostly expressed in brain, small intestine, heart, kidney, and spleen (at protein level).

It localises to the cytoplasm. It carries out the reaction a myo-inositol phosphate + H2O = myo-inositol + phosphate. The catalysed reaction is 1D-myo-inositol 1-phosphate + H2O = myo-inositol + phosphate. The enzyme catalyses 1D-myo-inositol 2-phosphate + H2O = myo-inositol + phosphate. It catalyses the reaction 1D-myo-inositol 3-phosphate + H2O = myo-inositol + phosphate. It carries out the reaction 1D-myo-inositol 4-phosphate + H2O = myo-inositol + phosphate. The catalysed reaction is 1D-myo-inositol 5-phosphate + H2O = myo-inositol + phosphate. The enzyme catalyses 1D-myo-inositol 6-phosphate + H2O = myo-inositol + phosphate. It catalyses the reaction alpha-D-glucose 1-phosphate + H2O = D-glucose + phosphate. It carries out the reaction glycerol 2-phosphate + H2O = glycerol + phosphate. The catalysed reaction is adenosine 2'-phosphate + H2O = adenosine + phosphate. Its pathway is polyol metabolism; myo-inositol biosynthesis; myo-inositol from D-glucose 6-phosphate: step 2/2. Its function is as follows. Phosphatase that can use myo-inositol monophosphates, myo-inositol 1,4-diphosphate, scyllo-inositol-1,4-diphosphate, glucose-1-phosphate, beta-glycerophosphate and 2'-AMP as substrates in vitro. No physiological substrates has been described yet. Has been implicated as the pharmacological target for lithium Li(+) action in brain. The protein is Inositol monophosphatase 2 of Mus musculus (Mouse).